Consider the following 71-residue polypeptide: MGVQKYTYTNPVLFWGIFEVRGTSKGVGVILTRFFWVFSGRERVLKRSSYIVILNLWLLRGFLEASDYSES.

It localises to the mitochondrion matrix. Its subcellular location is the kinetoplast. This is an uncharacterized protein from Trypanosoma brucei brucei.